We begin with the raw amino-acid sequence, 583 residues long: MPIAYKNINQLWAYIFTETLKRLGLAYAVICPGSRSTPLAVAFAQQAPNIEAISILDERSAAFFALGIAKATNRPVAIVCTSGTAGANFYPAVIEAQESRVPLLLLTADRPPELRDCHSGQTIDQMKLYGSYPNWQAELALPVSDMGMLAYLRQTLVHSWYRMQAPTPGPVHLNIPFRDPLAPIPDGTDLSYLLAKFHPEEFFAGITDTTPLPHHSPLSIPPEWLQSQRGIIIAGVAQPQQPQEYCRAIARLSQTLQWPVLAEGLSPVRNYADFNPYLISTYDLILRNQQLATRLAPDMVIQIGDMPTSKELRNWIDTHQPRRWVIDPSDQNLDPLHGRTTHLRIRVEELGYQGVEEDKSSVSEYLQLWCNAETKVRVNVDETLDKMEDLVECKAAWLLSQMLPPETPLFIANSMPVRDVEFFWKPNNLRVRSHFNRGANGIDGTLSTALGISHRQQSSVLITGDLALLHDTNGFLIRNKFVGHLTIILINNNGGGIFEMLPIAKFEPPFEEFFGTPQDIDFAQLCTTYNVQHELIHSWVHLQQRLNPLPNTGIRVLELRTNRKIDAQWRRDNLSNFAADNII.

It belongs to the TPP enzyme family. MenD subfamily. In terms of assembly, homodimer. Requires Mg(2+) as cofactor. The cofactor is Mn(2+). Thiamine diphosphate is required as a cofactor.

It carries out the reaction isochorismate + 2-oxoglutarate + H(+) = 5-enolpyruvoyl-6-hydroxy-2-succinyl-cyclohex-3-ene-1-carboxylate + CO2. Its pathway is quinol/quinone metabolism; 1,4-dihydroxy-2-naphthoate biosynthesis; 1,4-dihydroxy-2-naphthoate from chorismate: step 2/7. It functions in the pathway cofactor biosynthesis; phylloquinone biosynthesis. Functionally, catalyzes the thiamine diphosphate-dependent decarboxylation of 2-oxoglutarate and the subsequent addition of the resulting succinic semialdehyde-thiamine pyrophosphate anion to isochorismate to yield 2-succinyl-5-enolpyruvyl-6-hydroxy-3-cyclohexene-1-carboxylate (SEPHCHC). This is 2-succinyl-5-enolpyruvyl-6-hydroxy-3-cyclohexene-1-carboxylate synthase from Nostoc sp. (strain PCC 7120 / SAG 25.82 / UTEX 2576).